The following is a 166-amino-acid chain: Small ribosomal subunit protein uS5 (166 aa).

The region spanning 11 to 74 (LQEKLIAVNR…EKARRNMMNV (64 aa)) is the S5 DRBM domain.

It belongs to the universal ribosomal protein uS5 family. Part of the 30S ribosomal subunit. Contacts proteins S4 and S8.

With S4 and S12 plays an important role in translational accuracy. Functionally, located at the back of the 30S subunit body where it stabilizes the conformation of the head with respect to the body. The sequence is that of Small ribosomal subunit protein uS5 from Buchnera aphidicola subsp. Acyrthosiphon kondoi (Acyrthosiphon kondoi symbiotic bacterium).